The sequence spans 935 residues: Protein translocase subunit SecA (935 aa).

Residues Q90, 108–112 (GEGKT), and D504 each bind ATP. A disordered region spans residues 543–568 (GGRRPQGFGTSKKKGKNWSPSDADIF).

The protein belongs to the SecA family. In terms of assembly, monomer and homodimer. Part of the essential Sec protein translocation apparatus which comprises SecA, SecYEG and auxiliary proteins SecDF. Other proteins may also be involved.

Its subcellular location is the cell inner membrane. The protein resides in the cellular thylakoid membrane. It localises to the cytoplasm. It catalyses the reaction ATP + H2O + cellular proteinSide 1 = ADP + phosphate + cellular proteinSide 2.. Functionally, part of the Sec protein translocase complex. Interacts with the SecYEG preprotein conducting channel. Has a central role in coupling the hydrolysis of ATP to the transfer of proteins into and across the cell membrane, serving as an ATP-driven molecular motor driving the stepwise translocation of polypeptide chains across the membrane. Probably participates in protein translocation into and across both the cytoplasmic and thylakoid membranes in cyanobacterial cells. The sequence is that of Protein translocase subunit SecA from Rippkaea orientalis (strain PCC 8801 / RF-1) (Cyanothece sp. (strain PCC 8801)).